Consider the following 253-residue polypeptide: Imidazole glycerol phosphate synthase subunit HisF (253 aa).

Active-site residues include D11 and D130.

This sequence belongs to the HisA/HisF family. In terms of assembly, heterodimer of HisH and HisF.

The protein resides in the cytoplasm. It catalyses the reaction 5-[(5-phospho-1-deoxy-D-ribulos-1-ylimino)methylamino]-1-(5-phospho-beta-D-ribosyl)imidazole-4-carboxamide + L-glutamine = D-erythro-1-(imidazol-4-yl)glycerol 3-phosphate + 5-amino-1-(5-phospho-beta-D-ribosyl)imidazole-4-carboxamide + L-glutamate + H(+). Its pathway is amino-acid biosynthesis; L-histidine biosynthesis; L-histidine from 5-phospho-alpha-D-ribose 1-diphosphate: step 5/9. Functionally, IGPS catalyzes the conversion of PRFAR and glutamine to IGP, AICAR and glutamate. The HisF subunit catalyzes the cyclization activity that produces IGP and AICAR from PRFAR using the ammonia provided by the HisH subunit. In Ruminiclostridium cellulolyticum (strain ATCC 35319 / DSM 5812 / JCM 6584 / H10) (Clostridium cellulolyticum), this protein is Imidazole glycerol phosphate synthase subunit HisF.